We begin with the raw amino-acid sequence, 532 residues long: Phosphoenolpyruvate carboxykinase (ATP) (532 aa).

Residues R58, Y194, and K200 each coordinate substrate. Residues K200, H220, and G236–T244 each bind ATP. Mn(2+)-binding residues include K200 and H220. D257 is a Mn(2+) binding site. Residues E285, R322, R442 to V443, and T448 each bind ATP. R322 contacts substrate.

Belongs to the phosphoenolpyruvate carboxykinase (ATP) family. Mn(2+) is required as a cofactor.

It localises to the cytoplasm. The catalysed reaction is oxaloacetate + ATP = phosphoenolpyruvate + ADP + CO2. It participates in carbohydrate biosynthesis; gluconeogenesis. Its function is as follows. Involved in the gluconeogenesis. Catalyzes the conversion of oxaloacetate (OAA) to phosphoenolpyruvate (PEP) through direct phosphoryl transfer between the nucleoside triphosphate and OAA. This is Phosphoenolpyruvate carboxykinase (ATP) from Rubrobacter xylanophilus (strain DSM 9941 / JCM 11954 / NBRC 16129 / PRD-1).